Here is a 423-residue protein sequence, read N- to C-terminus: uncharacterized protein (423 aa).

This sequence belongs to the asfivirus E423R family.

The protein resides in the virion. This is an uncharacterized protein from African swine fever virus (isolate Tick/South Africa/Pretoriuskop Pr4/1996) (ASFV).